The chain runs to 618 residues: Dihydroxy-acid dehydratase (618 aa).

Mg(2+) is bound at residue Asp81. Position 122 (Cys122) interacts with [2Fe-2S] cluster. Asp123 and Lys124 together coordinate Mg(2+). Residue Lys124 is modified to N6-carboxylysine. Residue Cys197 coordinates [2Fe-2S] cluster. Position 493 (Glu493) interacts with Mg(2+). Residue Ser519 is the Proton acceptor of the active site.

The protein belongs to the IlvD/Edd family. As to quaternary structure, homodimer. It depends on [2Fe-2S] cluster as a cofactor. Mg(2+) is required as a cofactor.

It carries out the reaction (2R)-2,3-dihydroxy-3-methylbutanoate = 3-methyl-2-oxobutanoate + H2O. The enzyme catalyses (2R,3R)-2,3-dihydroxy-3-methylpentanoate = (S)-3-methyl-2-oxopentanoate + H2O. It participates in amino-acid biosynthesis; L-isoleucine biosynthesis; L-isoleucine from 2-oxobutanoate: step 3/4. It functions in the pathway amino-acid biosynthesis; L-valine biosynthesis; L-valine from pyruvate: step 3/4. Functions in the biosynthesis of branched-chain amino acids. Catalyzes the dehydration of (2R,3R)-2,3-dihydroxy-3-methylpentanoate (2,3-dihydroxy-3-methylvalerate) into 2-oxo-3-methylpentanoate (2-oxo-3-methylvalerate) and of (2R)-2,3-dihydroxy-3-methylbutanoate (2,3-dihydroxyisovalerate) into 2-oxo-3-methylbutanoate (2-oxoisovalerate), the penultimate precursor to L-isoleucine and L-valine, respectively. The chain is Dihydroxy-acid dehydratase from Bordetella avium (strain 197N).